The primary structure comprises 352 residues: Ion-translocating oxidoreductase complex subunit D (352 aa).

Helical transmembrane passes span 20 to 40, 42 to 62, 89 to 109, and 123 to 143; these read IMLLVLLAAVPGIAAQLWFFG, GTLVQILLASVSALLAEALVL, IPPLAPWWMVVLGTVFAVIIA, and PAMIGYVVLLISFPVQMTSWL. T187 carries the FMN phosphoryl threonine modification. Helical transmembrane passes span 214-234, 242-262, 267-287, 301-321, and 322-342; these read ILAGAGWQWVNLAWLAGGVWL, WHIPLSFLVTLALCATLGWLF, LAAPQIHLLSGATMLGAFFIL, LIFGALAGLLVWMIRSFGGYP, and DGVAFAVLLANITVPLIDYYT.

The protein belongs to the NqrB/RnfD family. As to quaternary structure, the complex is composed of six subunits: RsxA, RsxB, RsxC, RsxD, RsxE and RsxG. The cofactor is FMN.

It is found in the cell inner membrane. Functionally, part of a membrane-bound complex that couples electron transfer with translocation of ions across the membrane. Required to maintain the reduced state of SoxR. This Escherichia coli O81 (strain ED1a) protein is Ion-translocating oxidoreductase complex subunit D.